The sequence spans 138 residues: Acidic phospholipase A2 Tbo-E6 (138 aa).

The signal sequence occupies residues 1 to 16 (MRTLWILAVLLLGVKG). Cystine bridges form between Cys42-Cys131, Cys44-Cys60, Cys59-Cys111, Cys65-Cys138, Cys66-Cys104, Cys73-Cys97, and Cys91-Cys102. Ca(2+) is bound by residues Tyr43, Gly45, and Gly47. Residue His63 is part of the active site. Asp64 contributes to the Ca(2+) binding site. The active site involves Asp105.

In terms of assembly, monomer. It depends on Ca(2+) as a cofactor. Expressed by the venom gland.

The protein resides in the secreted. It carries out the reaction a 1,2-diacyl-sn-glycero-3-phosphocholine + H2O = a 1-acyl-sn-glycero-3-phosphocholine + a fatty acid + H(+). Snake venom phospholipase A2 (PLA2) that impairs hemostasis. It weakly inhibits ADP-induced platelet aggregation when tested on platelet rich plasma from human and rabbit blood (15-25% of inhibition at 5-10 ug of enzyme), and dose-dependently inhibits blood coagulation, possibly by inhibiting thrombin activation. Exhibits high hydrolytic activities toward L-dipalmitoyl phosphatidylcholine. PLA2 catalyzes the calcium-dependent hydrolysis of the 2-acyl groups in 3-sn-phosphoglycerides. The sequence is that of Acidic phospholipase A2 Tbo-E6 from Craspedocephalus borneensis (Borneo pit viper).